A 396-amino-acid chain; its full sequence is Elongation factor Tu (396 aa).

The 196-residue stretch at 10-205 (KPHVNIGTIG…ACDDNIPDPV (196 aa)) folds into the tr-type G domain. The interval 19-26 (GHVDHGKT) is G1. 19–26 (GHVDHGKT) provides a ligand contact to GTP. Position 26 (threonine 26) interacts with Mg(2+). A G2 region spans residues 62–66 (GITIN). The tract at residues 83-86 (DAPG) is G3. GTP is bound by residues 83–87 (DAPGH) and 138–141 (NKCD). Positions 138–141 (NKCD) are G4. Positions 175 to 177 (SAL) are G5.

Belongs to the TRAFAC class translation factor GTPase superfamily. Classic translation factor GTPase family. EF-Tu/EF-1A subfamily. As to quaternary structure, monomer.

The protein localises to the cytoplasm. The enzyme catalyses GTP + H2O = GDP + phosphate + H(+). In terms of biological role, GTP hydrolase that promotes the GTP-dependent binding of aminoacyl-tRNA to the A-site of ribosomes during protein biosynthesis. The sequence is that of Elongation factor Tu from Corynebacterium glutamicum (strain ATCC 13032 / DSM 20300 / JCM 1318 / BCRC 11384 / CCUG 27702 / LMG 3730 / NBRC 12168 / NCIMB 10025 / NRRL B-2784 / 534).